The primary structure comprises 211 residues: MAKLYFYYSTMNAGKSTVLLQSSYNYRERGMNTLILSPEIDTRFGSGKVASRIGIESESVSFNTSDNLLNLVRNETRINPLHCVLVDEAQFLTRTQVRQLSDVCDDLDIPVLAYGLRTDFQGNLFEGSEHLLAWADTLTELKTICHCGRKATMVLRVSESGQVIRDGEQVQIGGNERYQTVCRLHFKEAIYQRAEDELPLLDSNEPRQSER.

ATP-binding positions include 9-16 (STMNAGKS) and 87-90 (DEAQ). Glutamate 88 functions as the Proton acceptor in the catalytic mechanism. The Zn(2+) site is built by cysteine 145, cysteine 147, cysteine 182, and histidine 185.

Belongs to the thymidine kinase family. In terms of assembly, homotetramer.

The protein resides in the cytoplasm. It catalyses the reaction thymidine + ATP = dTMP + ADP + H(+). This Rhodopirellula baltica (strain DSM 10527 / NCIMB 13988 / SH1) protein is Thymidine kinase.